Here is a 1179-residue protein sequence, read N- to C-terminus: DNA-directed RNA polymerase subunit beta (1179 aa).

The protein belongs to the RNA polymerase beta chain family. The RNAP catalytic core consists of 2 alpha, 1 beta, 1 beta' and 1 omega subunit. When a sigma factor is associated with the core the holoenzyme is formed, which can initiate transcription.

It carries out the reaction RNA(n) + a ribonucleoside 5'-triphosphate = RNA(n+1) + diphosphate. Its function is as follows. DNA-dependent RNA polymerase catalyzes the transcription of DNA into RNA using the four ribonucleoside triphosphates as substrates. The chain is DNA-directed RNA polymerase subunit beta from Oceanobacillus iheyensis (strain DSM 14371 / CIP 107618 / JCM 11309 / KCTC 3954 / HTE831).